The following is a 337-amino-acid chain: Tetraacyldisaccharide 4'-kinase (337 aa).

55–62 (TIGGNGKT) provides a ligand contact to ATP.

This sequence belongs to the LpxK family.

The catalysed reaction is a lipid A disaccharide + ATP = a lipid IVA + ADP + H(+). It participates in glycolipid biosynthesis; lipid IV(A) biosynthesis; lipid IV(A) from (3R)-3-hydroxytetradecanoyl-[acyl-carrier-protein] and UDP-N-acetyl-alpha-D-glucosamine: step 6/6. Its function is as follows. Transfers the gamma-phosphate of ATP to the 4'-position of a tetraacyldisaccharide 1-phosphate intermediate (termed DS-1-P) to form tetraacyldisaccharide 1,4'-bis-phosphate (lipid IVA). The sequence is that of Tetraacyldisaccharide 4'-kinase from Blochmanniella pennsylvanica (strain BPEN).